A 483-amino-acid polypeptide reads, in one-letter code: UDP-N-acetylmuramoyl-L-alanyl-D-glutamate--2,6-diaminopimelate ligase (483 aa).

Ser-29 contacts UDP-N-acetyl-alpha-D-muramoyl-L-alanyl-D-glutamate. ATP is bound at residue 112 to 118; that stretch reads GTNGKTT. UDP-N-acetyl-alpha-D-muramoyl-L-alanyl-D-glutamate contacts are provided by residues 154–155, Ser-181, and Arg-189; that span reads TT. Lys-221 is modified (N6-carboxylysine). Residues Arg-380, 404-407, Gly-454, and Glu-458 contribute to the meso-2,6-diaminopimelate site; that span reads DNPR. The short motif at 404–407 is the Meso-diaminopimelate recognition motif element; sequence DNPR.

It belongs to the MurCDEF family. MurE subfamily. Requires Mg(2+) as cofactor. Carboxylation is probably crucial for Mg(2+) binding and, consequently, for the gamma-phosphate positioning of ATP.

It localises to the cytoplasm. It carries out the reaction UDP-N-acetyl-alpha-D-muramoyl-L-alanyl-D-glutamate + meso-2,6-diaminopimelate + ATP = UDP-N-acetyl-alpha-D-muramoyl-L-alanyl-gamma-D-glutamyl-meso-2,6-diaminopimelate + ADP + phosphate + H(+). It participates in cell wall biogenesis; peptidoglycan biosynthesis. In terms of biological role, catalyzes the addition of meso-diaminopimelic acid to the nucleotide precursor UDP-N-acetylmuramoyl-L-alanyl-D-glutamate (UMAG) in the biosynthesis of bacterial cell-wall peptidoglycan. The polypeptide is UDP-N-acetylmuramoyl-L-alanyl-D-glutamate--2,6-diaminopimelate ligase (Clostridium botulinum (strain ATCC 19397 / Type A)).